The primary structure comprises 641 residues: Pumilio homolog 24 (641 aa).

The segment at Met-1–Lys-82 is disordered. The PUM-HD domain maps to Gln-9–Asn-404. Composition is skewed to basic and acidic residues over residues Arg-14–Lys-27 and Arg-67–Ala-76. 5 Pumilio repeats span residues Lys-118–Thr-153, Glu-154–Ser-189, Ser-190–Ala-225, Gln-303–Lys-340, and Ala-341–Arg-378. A disordered region spans residues Met-427–Ala-468. A compositionally biased stretch (basic and acidic residues) spans Asp-428 to Asp-440. The segment covering Gly-441–Thr-455 has biased composition (acidic residues). A compositionally biased stretch (basic and acidic residues) spans Val-456 to Ala-468.

It localises to the nucleus. It is found in the nucleolus. Sequence-specific RNA-binding protein that regulates translation and mRNA stability by binding the 3'-UTR of target mRNAs. This Arabidopsis thaliana (Mouse-ear cress) protein is Pumilio homolog 24 (APUM24).